The chain runs to 418 residues: MDYLHVYNNNQAHVPRTPPGRQCLSPVLPPIILALDQQHSLTFGYSSPRCLPTPILPSMSTNTPVHWSQQVVTIPVAVRNHAAMMPIITPMTSPRPQFEATAPSPPLAPVAIKLPDLKLPPSPVPSTVEDRVSHPILPKIVIGNGGGRDVERDSTEELIRKIPNYIGCAKTKAQLSKVRSGKQLIACAQEYHHPVNKDEIENINNILNFRDFIFKHPKSSFEFLCTLSFEQFVRVYSFISFIYRTKKINKNKYELVCEMNVHEQLSNKRIQRTRTPEKYKIHLICESKLILTFNHCTKTVKFESINGGHCHPISANHIIKPSLFLTHCINKCYQTVSDPTDLKLALRDALEALDHERIGLSFLKRRHFKCSHQASSLSNASATLKKQEDHDTFGVHTGIIHTANFFMFNASSDIFQRN.

This is an uncharacterized protein from Saccharomyces cerevisiae (strain ATCC 204508 / S288c) (Baker's yeast).